The primary structure comprises 622 residues: 1-deoxy-D-xylulose-5-phosphate synthase (622 aa).

Thiamine diphosphate-binding positions include His-80 and 121-123 (GHS). Residue Asp-152 participates in Mg(2+) binding. Thiamine diphosphate is bound by residues 153 to 154 (GA), Asn-181, Tyr-288, and Glu-370. Asn-181 lines the Mg(2+) pocket.

This sequence belongs to the transketolase family. DXPS subfamily. In terms of assembly, homodimer. It depends on Mg(2+) as a cofactor. Thiamine diphosphate serves as cofactor.

The enzyme catalyses D-glyceraldehyde 3-phosphate + pyruvate + H(+) = 1-deoxy-D-xylulose 5-phosphate + CO2. Its pathway is metabolic intermediate biosynthesis; 1-deoxy-D-xylulose 5-phosphate biosynthesis; 1-deoxy-D-xylulose 5-phosphate from D-glyceraldehyde 3-phosphate and pyruvate: step 1/1. Functionally, catalyzes the acyloin condensation reaction between C atoms 2 and 3 of pyruvate and glyceraldehyde 3-phosphate to yield 1-deoxy-D-xylulose-5-phosphate (DXP). This chain is 1-deoxy-D-xylulose-5-phosphate synthase, found in Shewanella sp. (strain MR-4).